The chain runs to 156 residues: Transcriptional repressor NrdR (156 aa).

A zinc finger lies at 3–34; it reads CPFCGSMDTRVLDSRPTLDGAAIRRRRECISC. In terms of domain architecture, ATP-cone spans 49 to 139; that stretch reads VLVIKKDGRR…VYRDFREVDQ (91 aa).

Belongs to the NrdR family. Zn(2+) is required as a cofactor.

Functionally, negatively regulates transcription of bacterial ribonucleotide reductase nrd genes and operons by binding to NrdR-boxes. The protein is Transcriptional repressor NrdR of Thermotoga neapolitana (strain ATCC 49049 / DSM 4359 / NBRC 107923 / NS-E).